A 197-amino-acid chain; its full sequence is Probable GTP-binding protein EngB (197 aa).

Residues 22–194 (DLPEIAFAGR…LETIARMTGI (173 aa)) enclose the EngB-type G domain. Residues 30 to 37 (GRSNVGKS), 57 to 61 (GKTRL), 75 to 78 (DLPG), 142 to 145 (TKAD), and 173 to 175 (FST) each bind GTP. Residues S37 and T59 each coordinate Mg(2+).

Belongs to the TRAFAC class TrmE-Era-EngA-EngB-Septin-like GTPase superfamily. EngB GTPase family. Mg(2+) serves as cofactor.

Functionally, necessary for normal cell division and for the maintenance of normal septation. This is Probable GTP-binding protein EngB from Desulfosudis oleivorans (strain DSM 6200 / JCM 39069 / Hxd3) (Desulfococcus oleovorans).